Reading from the N-terminus, the 605-residue chain is F-box/WD repeat-containing protein pof1 (605 aa).

Positions 107 to 153 constitute an F-box domain; the sequence is LDFLSLLPVEISFRILSFLDARSLCQAAQVSKHWKELADDDVIWHRM. Over residues 195-212 the composition is skewed to basic and acidic residues; sequence GVDQAHESSPVKKAKLDD. The tract at residues 195 to 231 is disordered; it reads GVDQAHESSPVKKAKLDDYPTSSNEETISSVKPPSPN. Over residues 214 to 231 the composition is skewed to polar residues; the sequence is PTSSNEETISSVKPPSPN. A phosphoserine mark is found at serine 229 and serine 232. WD repeat units follow at residues 271–299, 311–339, 350–379, 390–420, 432–460, 472–500, and 510–538; these read GHSD…RLWN, GHSS…RIWN, HGHT…KLWH, GHTG…KIWS, AHIG…KQWD, GHIE…KVWE, and NHSE…YLWL.

In terms of assembly, a part of the E3 ubiquitin ligase Skp1-Cullin-1-F-box (SCF) complex. Interacts with cul1, skp1 and phosphorylated zip1.

The protein resides in the nucleus. In terms of biological role, probably recognizes and binds to some phosphorylated proteins and promotes their ubiquitination and degradation. Required for the inactivation of zip1 via ubiquitination. This is F-box/WD repeat-containing protein pof1 (pof1) from Schizosaccharomyces pombe (strain 972 / ATCC 24843) (Fission yeast).